The sequence spans 393 residues: CCA-adding enzyme (393 aa).

ATP is bound by residues Gly-27 and Arg-30. Residues Gly-27 and Arg-30 each contribute to the CTP site. Positions 40 and 42 each coordinate Mg(2+). Residues Arg-111, Asp-154, Arg-157, Arg-160, and Arg-163 each contribute to the ATP site. CTP is bound by residues Arg-111, Asp-154, Arg-157, Arg-160, and Arg-163.

Belongs to the tRNA nucleotidyltransferase/poly(A) polymerase family. Bacterial CCA-adding enzyme type 3 subfamily. As to quaternary structure, homodimer. The cofactor is Mg(2+).

It catalyses the reaction a tRNA precursor + 2 CTP + ATP = a tRNA with a 3' CCA end + 3 diphosphate. It carries out the reaction a tRNA with a 3' CCA end + 2 CTP + ATP = a tRNA with a 3' CCACCA end + 3 diphosphate. Catalyzes the addition and repair of the essential 3'-terminal CCA sequence in tRNAs without using a nucleic acid template. Adds these three nucleotides in the order of C, C, and A to the tRNA nucleotide-73, using CTP and ATP as substrates and producing inorganic pyrophosphate. tRNA 3'-terminal CCA addition is required both for tRNA processing and repair. Also involved in tRNA surveillance by mediating tandem CCA addition to generate a CCACCA at the 3' terminus of unstable tRNAs. While stable tRNAs receive only 3'-terminal CCA, unstable tRNAs are marked with CCACCA and rapidly degraded. This Listeria monocytogenes serotype 4b (strain CLIP80459) protein is CCA-adding enzyme.